The chain runs to 96 residues: Co-chaperonin GroES (96 aa).

This sequence belongs to the GroES chaperonin family. In terms of assembly, heptamer of 7 subunits arranged in a ring. Interacts with the chaperonin GroEL.

It is found in the cytoplasm. In terms of biological role, together with the chaperonin GroEL, plays an essential role in assisting protein folding. The GroEL-GroES system forms a nano-cage that allows encapsulation of the non-native substrate proteins and provides a physical environment optimized to promote and accelerate protein folding. GroES binds to the apical surface of the GroEL ring, thereby capping the opening of the GroEL channel. The sequence is that of Co-chaperonin GroES from Shewanella amazonensis (strain ATCC BAA-1098 / SB2B).